The chain runs to 1049 residues: Dyslexia-associated protein KIAA0319-like protein (1049 aa).

At 1-29 (MEKRLGVKPNPASWILSGYYWQTSAKWLR) the chain is on the cytoplasmic side. A helical membrane pass occupies residues 30 to 50 (SLYLFYTCFCFSVLWLSTDAS). Positions 49-127 (ASESRCQQGK…AFRTHSSNSM (79 aa)) constitute an MANSC domain. The Extracellular portion of the chain corresponds to 51-932 (ESRCQQGKTQ…DSNCEWSVLY (882 aa)). 5 N-linked (GlcNAc...) asparagine glycosylation sites follow: asparagine 247, asparagine 395, asparagine 472, asparagine 487, and asparagine 525. 5 PKD domains span residues 312–401 (SAGE…VKPE), 409–498 (IAIV…VNKA), 504–594 (VANA…VQPE), 600–688 (QADA…VKEE), and 694–785 (IAKI…VKPD). The helical transmembrane segment at 933-953 (VIIATFVIVVALGILSWTVIC) threads the bilayer. Topologically, residues 954 to 1049 (CCKRQKGKPK…KARSPREEIL (96 aa)) are cytoplasmic. At threonine 974 the chain carries Phosphothreonine. Serine 978, serine 1009, and serine 1031 each carry phosphoserine. Positions 1022 to 1049 (GKLLHGQNGSVPNGQTPLKARSPREEIL) are disordered. Residues 1028 to 1037 (QNGSVPNGQT) are compositionally biased toward polar residues. At threonine 1037 the chain carries Phosphothreonine.

In terms of assembly, interacts with RTN4R. (Microbial infection) Interacts with AAV-2 VP1. N-glycosylated. In terms of tissue distribution, expressed in cortical neurons in the brain cortex (at protein level).

Its subcellular location is the cytoplasmic granule membrane. It is found in the golgi apparatus membrane. The protein localises to the golgi apparatus. It localises to the trans-Golgi network membrane. The protein resides in the cell membrane. Its function is as follows. Possible role in axon guidance through interaction with RTN4R. Functionally, (Microbial infection) Acts as a receptor for adeno-associated virus and is involved in adeno-associated virus infection through endocytosis system. The protein is Dyslexia-associated protein KIAA0319-like protein of Homo sapiens (Human).